A 185-amino-acid polypeptide reads, in one-letter code: Ribosome-recycling factor (185 aa).

This sequence belongs to the RRF family.

The protein resides in the cytoplasm. Functionally, responsible for the release of ribosomes from messenger RNA at the termination of protein biosynthesis. May increase the efficiency of translation by recycling ribosomes from one round of translation to another. The sequence is that of Ribosome-recycling factor from Shewanella oneidensis (strain ATCC 700550 / JCM 31522 / CIP 106686 / LMG 19005 / NCIMB 14063 / MR-1).